Consider the following 443-residue polypeptide: Protein AknT (443 aa).

It belongs to the cytochrome P450 family.

In terms of biological role, involved in the biosynthesis of the anthracycline antitumor agent aclacinomycin A. AknT is required for the glycosylation of aklavinone aglycone by AknS to yield aclacinomycin T (rhodosaminyl-aklavinone). The sequence is that of Protein AknT from Streptomyces galilaeus.